Reading from the N-terminus, the 174-residue chain is Ribosome maturation factor RimM (174 aa).

The region spanning 95–174 (DDEFYWRDLI…QIQVEWPSDF (80 aa)) is the PRC barrel domain.

This sequence belongs to the RimM family. In terms of assembly, binds ribosomal protein uS19.

The protein resides in the cytoplasm. Functionally, an accessory protein needed during the final step in the assembly of 30S ribosomal subunit, possibly for assembly of the head region. Essential for efficient processing of 16S rRNA. May be needed both before and after RbfA during the maturation of 16S rRNA. It has affinity for free ribosomal 30S subunits but not for 70S ribosomes. The polypeptide is Ribosome maturation factor RimM (Idiomarina loihiensis (strain ATCC BAA-735 / DSM 15497 / L2-TR)).